Consider the following 187-residue polypeptide: Corticoliberin (187 aa).

The signal sequence occupies residues 1-24 (MRLRLLVSAGMLLVALSPCLPCRA). Residues 25 to 144 (LLSRGSVSGA…HQGALERERR (120 aa)) constitute a propeptide that is removed on maturation. Residues 75–95 (AARLSPNSTPLTAGRGSRPSH) are disordered. The residue at position 185 (Ile-185) is an Isoleucine amide.

This sequence belongs to the sauvagine/corticotropin-releasing factor/urotensin I family. In terms of assembly, interacts (via C-terminus) with CRFR1 (via N-terminal extracellular domain). In terms of tissue distribution, produced by the hypothalamus.

The protein localises to the secreted. Hormone regulating the release of corticotropin from pituitary gland. Induces NLRP6 in intestinal epithelial cells, hence may influence gut microbiota profile. The polypeptide is Corticoliberin (Crh) (Rattus norvegicus (Rat)).